Here is a 173-residue protein sequence, read N- to C-terminus: uncharacterized protein (173 aa).

This is an uncharacterized protein from Haemophilus influenzae (strain ATCC 51907 / DSM 11121 / KW20 / Rd).